The primary structure comprises 302 residues: Deoxyribonuclease-1-like 1 (302 aa).

An N-terminal signal peptide occupies residues 1–18; sequence MHYPTALLFLILVNGAQA. Residues glutamate 97 and histidine 148 contribute to the active site. Cysteines 187 and 224 form a disulfide. N-linked (GlcNAc...) asparagine glycosylation occurs at asparagine 261.

It belongs to the DNase I family.

The protein resides in the endoplasmic reticulum. The sequence is that of Deoxyribonuclease-1-like 1 (DNASE1L1) from Chlorocebus aethiops (Green monkey).